A 329-amino-acid polypeptide reads, in one-letter code: 4-hydroxythreonine-4-phosphate dehydrogenase (329 aa).

Histidine 136 and threonine 137 together coordinate substrate. 3 residues coordinate a divalent metal cation: histidine 166, histidine 211, and histidine 266. Residues lysine 274, asparagine 283, and arginine 292 each contribute to the substrate site.

The protein belongs to the PdxA family. In terms of assembly, homodimer. It depends on Zn(2+) as a cofactor. Mg(2+) is required as a cofactor. Co(2+) serves as cofactor.

It is found in the cytoplasm. It catalyses the reaction 4-(phosphooxy)-L-threonine + NAD(+) = 3-amino-2-oxopropyl phosphate + CO2 + NADH. Its pathway is cofactor biosynthesis; pyridoxine 5'-phosphate biosynthesis; pyridoxine 5'-phosphate from D-erythrose 4-phosphate: step 4/5. Functionally, catalyzes the NAD(P)-dependent oxidation of 4-(phosphooxy)-L-threonine (HTP) into 2-amino-3-oxo-4-(phosphooxy)butyric acid which spontaneously decarboxylates to form 3-amino-2-oxopropyl phosphate (AHAP). This Citrobacter koseri (strain ATCC BAA-895 / CDC 4225-83 / SGSC4696) protein is 4-hydroxythreonine-4-phosphate dehydrogenase.